Here is a 267-residue protein sequence, read N- to C-terminus: Urease accessory protein UreD (267 aa).

This sequence belongs to the UreD family. UreD, UreF and UreG form a complex that acts as a GTP-hydrolysis-dependent molecular chaperone, activating the urease apoprotein by helping to assemble the nickel containing metallocenter of UreC. The UreE protein probably delivers the nickel.

Its subcellular location is the cytoplasm. Functionally, required for maturation of urease via the functional incorporation of the urease nickel metallocenter. The protein is Urease accessory protein UreD of Synechococcus sp. (strain JA-2-3B'a(2-13)) (Cyanobacteria bacterium Yellowstone B-Prime).